A 283-amino-acid chain; its full sequence is Adenylate kinase 2, chloroplastic (283 aa).

The transit peptide at 1–59 directs the protein to the chloroplast; that stretch reads MTGCVNSISPPPVTLYRHRASPSRSSFSLSGDALHSLYRHRRVSRSPSIIAPKFQIVAA. 74 to 79 is a binding site for ATP; sequence ASGKGT. The tract at residues 94–123 is NMP; it reads SAGDLLRAEIASGSENGRRAKEHMEKGQLV. AMP is bound by residues Arg-100, 121 to 123, 150 to 153, and Gln-157; these read QLV and GYPR. The LID stretch occupies residues 187–220; it reads GRRLDPVTGKIYHLKYSPPETEEIAVRLTQRFDD. Arg-188 is an ATP binding site. Residues Arg-217 and Arg-228 each contribute to the AMP site.

The protein belongs to the adenylate kinase family. As to quaternary structure, monomer.

It localises to the plastid. The protein resides in the chloroplast stroma. It carries out the reaction AMP + ATP = 2 ADP. Catalyzes the reversible transfer of the terminal phosphate group between ATP and AMP. Plays an important role in cellular energy homeostasis and in adenine nucleotide metabolism. Plays a major role in the equilibration of adenylates and de novo synthesis of ADP in the plastid stroma. The protein is Adenylate kinase 2, chloroplastic of Arabidopsis thaliana (Mouse-ear cress).